Consider the following 657-residue polypeptide: WD repeat-containing protein 70 (657 aa).

Disordered regions lie at residues Met1–Leu21 and Phe43–Arg172. The segment covering Gln45–Glu78 has biased composition (basic and acidic residues). The span at Pro82–Asp105 shows a compositional bias: low complexity. Acidic residues-rich tracts occupy residues Ser106–Leu119 and Glu150–Asn168. 7 WD repeats span residues His183–Lys222, Cys230–Lys271, Gly284–Ser324, Gly333–Phe372, Asp379–Phe418, Pro424–Glu469, and Ile472–Ala511. Lys299 participates in a covalent cross-link: Glycyl lysine isopeptide (Lys-Gly) (interchain with G-Cter in SUMO2). At Lys455 the chain carries N6-acetyllysine. The segment covering Arg543–Glu568 has biased composition (basic and acidic residues). The tract at residues Arg543 to Gly584 is disordered. The segment covering Pro574–Gly584 has biased composition (gly residues). Thr582 carries the post-translational modification Phosphothreonine. Glycyl lysine isopeptide (Lys-Gly) (interchain with G-Cter in SUMO2) cross-links involve residues Lys593 and Lys599. A phosphoserine mark is found at Ser624 and Ser641. The segment at Thr634–Ile657 is disordered. Positions Lys647–Ile657 are enriched in basic and acidic residues.

Belongs to the WD repeat GAD-1 family.

In Mus musculus (Mouse), this protein is WD repeat-containing protein 70 (Wdr70).